Reading from the N-terminus, the 629-residue chain is Putrebactin synthase (629 aa).

Belongs to the IucA/IucC family. In terms of assembly, homodimer.

The enzyme catalyses 2 N-(3-carboxypropanoyl)-N-hydroxyputrescine + 2 ATP = putrebactin + 2 AMP + 2 diphosphate + 2 H(+). The catalysed reaction is 2 N-(3-carboxypropanoyl)-N-hydroxyputrescine + ATP = pre-putrebactin + AMP + diphosphate + H(+). It catalyses the reaction pre-putrebactin + ATP = putrebactin + AMP + diphosphate + H(+). It participates in siderophore biosynthesis. Requires Mg(2+) for activity. Its function is as follows. Ligase involved in the biosynthesis of the siderophore putrebactin. Catalyzes the ATP-dependent head-to-tail dimerization of N-hydroxy-N-succinyl-putrescine (HSP) to give pre-putrebactin and subsequent macrocyclization of pre-putrebactin to give putrebactin. The sequence is that of Putrebactin synthase from Shewanella sp. (strain MR-4).